The chain runs to 291 residues: Protein ZAR1-like (291 aa).

Positions 103 to 152 (GSQTLHSSSLSDRTSSRKPTEAWEVGRRALIRRPQDGEDEESQEELTGPT) are disordered. Residues 106–115 (TLHSSSLSDR) show a composition bias toward low complexity. Residues 116 to 129 (TSSRKPTEAWEVGR) are compositionally biased toward basic and acidic residues. Residues 195–280 (LKYGYFHCKD…QELCGHCKDK (86 aa)) form a 3CxxC-type zinc finger.

This sequence belongs to the ZAR1 family. Interacts with YBX2. As to expression, expressed in oocytes and zygotes. Predominantly expressed in maturing oocytes before maternal-to-zygotic transition (MZT). Less abundant than Zar1.

Its subcellular location is the cytoplasm. It is found in the cytoplasmic ribonucleoprotein granule. Functionally, mRNA-binding protein required for maternal mRNA storage, translation and degradation during oocyte maturation. Probably promotes formation of some phase-separated membraneless compartment that stores maternal mRNAs in oocytes: acts by undergoing liquid-liquid phase separation upon binding to maternal mRNAs. Binds to the 3'-UTR of maternal mRNAs, inhibiting their translation. The chain is Protein ZAR1-like from Mus musculus (Mouse).